A 307-amino-acid chain; its full sequence is UPF0276 protein PM0211 (307 aa).

Belongs to the UPF0276 family.

This Pasteurella multocida (strain Pm70) protein is UPF0276 protein PM0211.